The chain runs to 1025 residues: AP-2 complex subunit alpha (1025 aa).

The disordered stretch occupies residues arginine 713–serine 737. The residue at position 727 (threonine 727) is a Phosphothreonine. Phosphoserine is present on serine 733.

Belongs to the adaptor complexes large subunit family. In terms of assembly, adaptor protein complex 2 (AP-2) is a heterotetramer composed of two large adaptins (alpha-type subunit APL3 and beta-type subunit APL1), a medium chain (mu-type subunit APM4) and a small adaptin (sigma-type subunit APS2).

It is found in the cell membrane. The protein localises to the membrane. It localises to the coated pit. Functionally, adaptins are components of the adaptor complexes which link clathrin to receptors in coated vesicles. Clathrin-associated protein complexes are believed to interact with the cytoplasmic tails of membrane proteins, leading to their selection and concentration. Alpha adaptin is a subunit of the plasma membrane adaptor. Facilitates interaction between APL1 and APS2. This is AP-2 complex subunit alpha (APL3) from Saccharomyces cerevisiae (strain ATCC 204508 / S288c) (Baker's yeast).